A 37-amino-acid chain; its full sequence is Large ribosomal subunit protein bL36 (37 aa).

Belongs to the bacterial ribosomal protein bL36 family.

This is Large ribosomal subunit protein bL36 from Mycoplasma pneumoniae (strain ATCC 29342 / M129 / Subtype 1) (Mycoplasmoides pneumoniae).